The following is an 84-amino-acid chain: Cytochrome b559 subunit alpha (84 aa).

Residues 22-36 form a helical membrane-spanning segment; sequence IIHSITIPALFVAGW. His-24 contacts heme.

This sequence belongs to the PsbE/PsbF family. Heterodimer of an alpha subunit and a beta subunit. PSII is composed of 1 copy each of membrane proteins PsbA, PsbB, PsbC, PsbD, PsbE, PsbF, PsbH, PsbI, PsbJ, PsbK, PsbL, PsbM, PsbT, PsbX, PsbY, PsbZ, Psb30/Ycf12, at least 3 peripheral proteins of the oxygen-evolving complex and a large number of cofactors. It forms dimeric complexes. Heme b is required as a cofactor.

The protein localises to the plastid. It is found in the chloroplast thylakoid membrane. This b-type cytochrome is tightly associated with the reaction center of photosystem II (PSII). PSII is a light-driven water:plastoquinone oxidoreductase that uses light energy to abstract electrons from H(2)O, generating O(2) and a proton gradient subsequently used for ATP formation. It consists of a core antenna complex that captures photons, and an electron transfer chain that converts photonic excitation into a charge separation. The chain is Cytochrome b559 subunit alpha from Guillardia theta (Cryptophyte).